A 260-amino-acid chain; its full sequence is Voltage-dependent calcium channel gamma-6 subunit (260 aa).

The next 4 membrane-spanning stretches (helical) occupy residues 43–63 (LLVAIVGATLAVLAVGTEFWV), 143–163 (VIAVLGLTAMALGCLCVIMVL), 169–189 (SLLRLGAVCFGLSGLLLFVSL), and 221–241 (LGCGVGAGLILLLGGVCFLLL).

It belongs to the PMP-22/EMP/MP20 family. CACNG subfamily. In terms of assembly, interacts with CACNA1C. Identified in a complex with the L-type calcium channel subunits CACNA1C, CACNA2D1 and either CACNB1 or CACNB2. As to expression, detected in brain and heart (at protein level).

The protein resides in the cell membrane. Regulates the activity of L-type calcium channels that contain CACNA1C as pore-forming subunit. This chain is Voltage-dependent calcium channel gamma-6 subunit (Cacng6), found in Mus musculus (Mouse).